Here is a 317-residue protein sequence, read N- to C-terminus: Beta-ketoacyl-[acyl-carrier-protein] synthase III (317 aa).

Catalysis depends on residues Cys112 and His244. Residues 245 to 249 form an ACP-binding region; that stretch reads QANVR. Asn274 is a catalytic residue.

It belongs to the thiolase-like superfamily. FabH family. In terms of assembly, homodimer.

The protein localises to the cytoplasm. The catalysed reaction is malonyl-[ACP] + acetyl-CoA + H(+) = 3-oxobutanoyl-[ACP] + CO2 + CoA. The protein operates within lipid metabolism; fatty acid biosynthesis. Functionally, catalyzes the condensation reaction of fatty acid synthesis by the addition to an acyl acceptor of two carbons from malonyl-ACP. Catalyzes the first condensation reaction which initiates fatty acid synthesis and may therefore play a role in governing the total rate of fatty acid production. Possesses both acetoacetyl-ACP synthase and acetyl transacylase activities. Its substrate specificity determines the biosynthesis of branched-chain and/or straight-chain of fatty acids. The polypeptide is Beta-ketoacyl-[acyl-carrier-protein] synthase III (Rickettsia bellii (strain OSU 85-389)).